A 78-amino-acid chain; its full sequence is Large ribosomal subunit protein bL28 (78 aa).

Residues 1-20 (MSRVCQVTGKRPVTGNNRSH) are disordered.

This sequence belongs to the bacterial ribosomal protein bL28 family.

This is Large ribosomal subunit protein bL28 from Vibrio parahaemolyticus serotype O3:K6 (strain RIMD 2210633).